Consider the following 273-residue polypeptide: 4-hydroxy-tetrahydrodipicolinate reductase (273 aa).

Residues 8-13 (GACGRM), glutamate 34, 102-104 (GTT), and 128-131 (APNM) each bind NAD(+). Histidine 160 functions as the Proton donor/acceptor in the catalytic mechanism. Residue histidine 161 coordinates (S)-2,3,4,5-tetrahydrodipicolinate. The active-site Proton donor is the lysine 164. 170 to 171 (GT) serves as a coordination point for (S)-2,3,4,5-tetrahydrodipicolinate.

This sequence belongs to the DapB family.

The protein resides in the cytoplasm. The enzyme catalyses (S)-2,3,4,5-tetrahydrodipicolinate + NAD(+) + H2O = (2S,4S)-4-hydroxy-2,3,4,5-tetrahydrodipicolinate + NADH + H(+). It carries out the reaction (S)-2,3,4,5-tetrahydrodipicolinate + NADP(+) + H2O = (2S,4S)-4-hydroxy-2,3,4,5-tetrahydrodipicolinate + NADPH + H(+). It functions in the pathway amino-acid biosynthesis; L-lysine biosynthesis via DAP pathway; (S)-tetrahydrodipicolinate from L-aspartate: step 4/4. Catalyzes the conversion of 4-hydroxy-tetrahydrodipicolinate (HTPA) to tetrahydrodipicolinate. This chain is 4-hydroxy-tetrahydrodipicolinate reductase, found in Methanothermobacter thermautotrophicus (strain ATCC 29096 / DSM 1053 / JCM 10044 / NBRC 100330 / Delta H) (Methanobacterium thermoautotrophicum).